A 407-amino-acid polypeptide reads, in one-letter code: Na(+)-translocating NADH-quinone reductase subunit F (407 aa).

Residues 6–26 (IFLAIGMFTAIVLGLVAIILV) traverse the membrane as a helical segment. Positions 35–127 (GDVTIQINGE…DMQIRVPEEV (93 aa)) constitute a 2Fe-2S ferredoxin-type domain. [2Fe-2S] cluster contacts are provided by Cys-70, Cys-76, Cys-79, and Cys-111. The FAD-binding FR-type domain maps to 130 to 269 (VKKWECTVES…YGPFGEFFAK (140 aa)).

It belongs to the NqrF family. In terms of assembly, composed of six subunits; NqrA, NqrB, NqrC, NqrD, NqrE and NqrF. [2Fe-2S] cluster serves as cofactor. The cofactor is FAD.

It localises to the cell inner membrane. The catalysed reaction is a ubiquinone + n Na(+)(in) + NADH + H(+) = a ubiquinol + n Na(+)(out) + NAD(+). In terms of biological role, NQR complex catalyzes the reduction of ubiquinone-1 to ubiquinol by two successive reactions, coupled with the transport of Na(+) ions from the cytoplasm to the periplasm. The first step is catalyzed by NqrF, which accepts electrons from NADH and reduces ubiquinone-1 to ubisemiquinone by a one-electron transfer pathway. The chain is Na(+)-translocating NADH-quinone reductase subunit F from Pseudomonas paraeruginosa (strain DSM 24068 / PA7) (Pseudomonas aeruginosa (strain PA7)).